A 281-amino-acid chain; its full sequence is 16S rRNA (guanine(1405)-N(7))-methyltransferase (281 aa).

S-adenosyl-L-methionine is bound by residues Y60, 105–107 (HTS), R111, G136, D160, 186–187 (QG), F203, and Q212.

The protein belongs to the methyltransferase superfamily. Aminoglycoside resistance family.

It catalyses the reaction guanosine(1405) in 16S rRNA + S-adenosyl-L-methionine = N(7)-methylguanosine(1405) in 16S rRNA + S-adenosyl-L-homocysteine. In terms of biological role, specifically methylates the N(7) position of guanine 1405 in 16S rRNA. Confers resistance to various aminoglycosides, including gentamicin and kanamycin. This is 16S rRNA (guanine(1405)-N(7))-methyltransferase (rmtC) from Proteus mirabilis.